A 384-amino-acid polypeptide reads, in one-letter code: MANEFKFTDVGEGLHEGKVTEILKQVGDQIKIDEALFVVETDKVTTELPSPFAGTISAINVKVGDVVSIGQVMAVIGEKTSTPLVEPKPQPTEEVAKVKEAGASVVGEIKVSDNLFPIFGVKPHATPAVKDTKVASSTNITVETTQKPESKTEQKTIAISTMRKAIAEAMTKSHAIIPTTVLTFYVNATKLKQYRESVNGYALSKYSMKISYFAFFVKAIVNALKKFPVFNASYDPDQNEIVLNDDINVGIAVDTEEGLIVPNIKQAQTKSVVEIAQAIVDLANKARTKKIKLTDLNKGTISVTNFGSLGAAVGTPIIKYPEMCIVATGNLEERIVKVENGIAVHTILPLTIAADHRWVDGADVGRFGKEIAKQIEELIDLTVA.

Residues 2–77 form the Lipoyl-binding domain; sequence ANEFKFTDVG…SIGQVMAVIG (76 aa). Lys43 carries the post-translational modification N6-lipoyllysine. His356 is a catalytic residue.

The protein belongs to the 2-oxoacid dehydrogenase family. As to quaternary structure, forms a 24-polypeptide structural core with octahedral symmetry. It depends on (R)-lipoate as a cofactor.

The enzyme catalyses N(6)-[(R)-dihydrolipoyl]-L-lysyl-[protein] + acetyl-CoA = N(6)-[(R)-S(8)-acetyldihydrolipoyl]-L-lysyl-[protein] + CoA. The pyruvate dehydrogenase complex catalyzes the overall conversion of pyruvate to acetyl-CoA and CO(2). It contains multiple copies of three enzymatic components: pyruvate dehydrogenase (E1), dihydrolipoamide acetyltransferase (E2) and lipoamide dehydrogenase (E3). This chain is Dihydrolipoyllysine-residue acetyltransferase component of pyruvate dehydrogenase complex (pdhC), found in Mycoplasma genitalium (strain ATCC 33530 / DSM 19775 / NCTC 10195 / G37) (Mycoplasmoides genitalium).